The primary structure comprises 189 residues: Small ribosomal subunit protein uS7 (189 aa).

Belongs to the universal ribosomal protein uS7 family. In terms of assembly, part of the 30S ribosomal subunit.

One of the primary rRNA binding proteins, it binds directly to 16S rRNA where it nucleates assembly of the head domain of the 30S subunit. Is located at the subunit interface close to the decoding center. This is Small ribosomal subunit protein uS7 from Methanosarcina acetivorans (strain ATCC 35395 / DSM 2834 / JCM 12185 / C2A).